Reading from the N-terminus, the 79-residue chain is Dolichyl-diphosphooligosaccharide--protein glycosyltransferase subunit TMEM258 (79 aa).

2 helical membrane passes run 19 to 39 and 55 to 75; these read PLLT…FTMI and FIAA…LLWV.

It belongs to the OST5 family. In terms of assembly, component of the oligosaccharyltransferase (OST) complex.

Its subcellular location is the membrane. It participates in protein modification; protein glycosylation. In terms of biological role, subunit of the oligosaccharyl transferase (OST) complex that catalyzes the initial transfer of a defined glycan (Glc(3)Man(9)GlcNAc(2) in eukaryotes) from the lipid carrier dolichol-pyrophosphate to an asparagine residue within an Asn-X-Ser/Thr consensus motif in nascent polypeptide chains, the first step in protein N-glycosylation. N-glycosylation occurs cotranslationally and the complex associates with the Sec61 complex at the channel-forming translocon complex that mediates protein translocation across the endoplasmic reticulum (ER). All subunits are required for a maximal enzyme activity. This is Dolichyl-diphosphooligosaccharide--protein glycosyltransferase subunit TMEM258 from Caenorhabditis elegans.